Here is a 432-residue protein sequence, read N- to C-terminus: Gamma-glutamyl phosphate reductase (432 aa).

This sequence belongs to the gamma-glutamyl phosphate reductase family.

It localises to the cytoplasm. It catalyses the reaction L-glutamate 5-semialdehyde + phosphate + NADP(+) = L-glutamyl 5-phosphate + NADPH + H(+). Its pathway is amino-acid biosynthesis; L-proline biosynthesis; L-glutamate 5-semialdehyde from L-glutamate: step 2/2. Catalyzes the NADPH-dependent reduction of L-glutamate 5-phosphate into L-glutamate 5-semialdehyde and phosphate. The product spontaneously undergoes cyclization to form 1-pyrroline-5-carboxylate. In Clavibacter michiganensis subsp. michiganensis (strain NCPPB 382), this protein is Gamma-glutamyl phosphate reductase.